Consider the following 319-residue polypeptide: Putative olfactory receptor 52L2 (319 aa).

At 1–43 the chain is on the extracellular side; it reads MNLDSFFSFLLKSLIMALSNSSWRLPQPSFFLVGIPGLEESQH. Asparagine 20 is a glycosylation site (N-linked (GlcNAc...) asparagine). The chain crosses the membrane as a helical span at residues 44–64; sequence WIALPLGILYLLALVGNVTIL. At 65–72 the chain is on the cytoplasmic side; that stretch reads FIIWMDPS. A helical membrane pass occupies residues 73-93; it reads LHQSMYLFLSMLAAIDLVVAS. At 94–117 the chain is on the extracellular side; it reads STAPKALAVLLVRAQEIGYTVCLI. Cysteine 115 and cysteine 207 are disulfide-bonded. The helical transmembrane segment at 118 to 138 threads the bilayer; that stretch reads QMFFTHAFSSMESGVLVAMAL. At 139–157 the chain is on the cytoplasmic side; sequence DRYVAICHPLHHSTILHPG. Residues 158–178 form a helical membrane-spanning segment; it reads VIGHIGMVVLVRGLLLLIPFL. The Extracellular portion of the chain corresponds to 179 to 214; sequence ILLRKLIFCQATIIGHAYCEHMAVVKLACSETTVNR. The helical transmembrane segment at 215 to 235 threads the bilayer; it reads AYGLTVALLVVGLDVLAIGVS. Residues 236–255 are Cytoplasmic-facing; the sequence is YAHILQAVLKVPGNEARLKA. A helical membrane pass occupies residues 256 to 276; the sequence is FSTCGSHVCVILVFYIPGMFS. Residues 277 to 291 are Extracellular-facing; the sequence is FLTHRFGHHVPHHVH. The chain crosses the membrane as a helical span at residues 292–312; it reads VLLAILYRLVPPALNPLVYRV. Residues 313–319 lie on the Cytoplasmic side of the membrane; it reads KTQKIHQ.

The protein belongs to the G-protein coupled receptor 1 family.

The protein resides in the cell membrane. Odorant receptor. This is Putative olfactory receptor 52L2 (OR52L2P) from Homo sapiens (Human).